The primary structure comprises 851 residues: DNA mismatch repair protein MutS (851 aa).

Position 602–609 (602–609 (GPNMSGKS)) interacts with ATP.

This sequence belongs to the DNA mismatch repair MutS family.

Functionally, this protein is involved in the repair of mismatches in DNA. It is possible that it carries out the mismatch recognition step. This protein has a weak ATPase activity. The chain is DNA mismatch repair protein MutS from Streptococcus pyogenes serotype M3 (strain SSI-1).